Here is a 307-residue protein sequence, read N- to C-terminus: Serine/threonine-protein phosphatase 4 catalytic subunit (307 aa).

Alanine 2 carries the post-translational modification N-acetylalanine. The Mn(2+) site is built by aspartate 54, histidine 56, aspartate 82, and asparagine 114. The active-site Proton donor is the histidine 115. Residues histidine 164 and histidine 238 each contribute to the Mn(2+) site. The residue at position 307 (leucine 307) is a Leucine methyl ester.

Belongs to the PPP phosphatase family. PP-4 (PP-X) subfamily. Serine/threonine-protein phosphatase 4 (PP4) occurs in different assemblies of the catalytic and one or more regulatory subunits. Component of the PP4 complexes PPP4C-PPP4R1, PPP4C-PPP4R2, PPP4C-PPP4R2-PPP4R3A, PPP4C-PPP4R2-PPP4R3B and PPP4C-PPP4R4. The PPP4C-PPP4R2 complex appears to be a tetramer composed of 2 molecules of PPP4C and 2 molecules of PPP4R2. Interacts with REL, NFKB1/p50 and RELA. Interacts with SMN1 and GEMIN4. Interacts with IRS4 (phosphorylated). Interacts with SMEK1/PPP4R3A; the interaction requires PP4R2. Interacts with HDAC3. Requires Mn(2+) as cofactor. Methylation at the C-terminal Leu-307 is critical for interactions with regulatory subunits and functions in DNA repair.

Its subcellular location is the cytoplasm. It localises to the nucleus. The protein localises to the cytoskeleton. The protein resides in the microtubule organizing center. It is found in the centrosome. It catalyses the reaction O-phospho-L-seryl-[protein] + H2O = L-seryl-[protein] + phosphate. The enzyme catalyses O-phospho-L-threonyl-[protein] + H2O = L-threonyl-[protein] + phosphate. Protein phosphatase that is involved in many processes such as microtubule organization at centrosomes, maturation of spliceosomal snRNPs, apoptosis, DNA repair, tumor necrosis factor (TNF)-alpha signaling, activation of c-Jun N-terminal kinase MAPK8, regulation of histone acetylation, DNA damage checkpoint signaling, NF-kappa-B activation and cell migration. The PPP4C-PPP4R1 PP4 complex may play a role in dephosphorylation and regulation of HDAC3. The PPP4C-PPP4R2-PPP4R3A PP4 complex specifically dephosphorylates H2AX phosphorylated on Ser-140 (gamma-H2AX) generated during DNA replication and required for DNA double strand break repair. Dephosphorylates NDEL1 at CDK1 phosphorylation sites and negatively regulates CDK1 activity in interphase. In response to DNA damage, catalyzes RPA2 dephosphorylation, an essential step for DNA repair since it allows the efficient RPA2-mediated recruitment of RAD51 to chromatin. In Homo sapiens (Human), this protein is Serine/threonine-protein phosphatase 4 catalytic subunit (PPP4C).